The sequence spans 378 residues: Chaperone protein DnaJ 2 (378 aa).

A J domain is found at 4-68 (DYYAVLGVRR…QKKQVYDLGG (65 aa)). The CR-type zinc finger occupies 130–212 (GTTKDIQVET…CAGDGRVRSR (83 aa)). The Zn(2+) site is built by Cys-143, Cys-146, Cys-160, Cys-163, Cys-186, Cys-189, Cys-200, and Cys-203. 4 CXXCXGXG motif repeats span residues 143-150 (CTTCSGEG), 160-167 (CDMCRGRG), 186-193 (CPQCQGFG), and 200-207 (CPECAGDG). Residues 351–378 (RGEERPTGQFQPGQQGLFSRLKDAFNGR) are disordered. The span at 358-367 (GQFQPGQQGL) shows a compositional bias: polar residues.

The protein belongs to the DnaJ family. Homodimer. Zn(2+) serves as cofactor.

It is found in the cytoplasm. Functionally, participates actively in the response to hyperosmotic and heat shock by preventing the aggregation of stress-denatured proteins and by disaggregating proteins, also in an autonomous, DnaK-independent fashion. Unfolded proteins bind initially to DnaJ; upon interaction with the DnaJ-bound protein, DnaK hydrolyzes its bound ATP, resulting in the formation of a stable complex. GrpE releases ADP from DnaK; ATP binding to DnaK triggers the release of the substrate protein, thus completing the reaction cycle. Several rounds of ATP-dependent interactions between DnaJ, DnaK and GrpE are required for fully efficient folding. Also involved, together with DnaK and GrpE, in the DNA replication of plasmids through activation of initiation proteins. This Streptomyces avermitilis (strain ATCC 31267 / DSM 46492 / JCM 5070 / NBRC 14893 / NCIMB 12804 / NRRL 8165 / MA-4680) protein is Chaperone protein DnaJ 2.